The sequence spans 330 residues: ADP-L-glycero-D-manno-heptose-6-epimerase (330 aa).

Residues 11–12 (FI), 32–33 (DN), lysine 39, lysine 54, 75–79 (EGACS), and asparagine 92 each bind NADP(+). The Proton acceptor role is filled by tyrosine 139. Residue lysine 143 participates in NADP(+) binding. Residue asparagine 168 participates in substrate binding. NADP(+) is bound by residues valine 169 and lysine 177. The Proton acceptor role is filled by lysine 177. Residues arginine 179, histidine 186, 200–203 (FGEY), arginine 213, and tyrosine 292 each bind substrate.

The protein belongs to the NAD(P)-dependent epimerase/dehydratase family. HldD subfamily. In terms of assembly, homopentamer. The cofactor is NADP(+).

It catalyses the reaction ADP-D-glycero-beta-D-manno-heptose = ADP-L-glycero-beta-D-manno-heptose. It participates in nucleotide-sugar biosynthesis; ADP-L-glycero-beta-D-manno-heptose biosynthesis; ADP-L-glycero-beta-D-manno-heptose from D-glycero-beta-D-manno-heptose 7-phosphate: step 4/4. Functionally, catalyzes the interconversion between ADP-D-glycero-beta-D-manno-heptose and ADP-L-glycero-beta-D-manno-heptose via an epimerization at carbon 6 of the heptose. The protein is ADP-L-glycero-D-manno-heptose-6-epimerase of Paraburkholderia phytofirmans (strain DSM 17436 / LMG 22146 / PsJN) (Burkholderia phytofirmans).